We begin with the raw amino-acid sequence, 296 residues long: Putative F-box protein At1g67623 (296 aa).

One can recognise an F-box domain in the interval 21–70 (SLCLDSLPEDLLVEISSCTGASSLSAVRNLRLVSKSFRRICDEKYVFYRL).

This Arabidopsis thaliana (Mouse-ear cress) protein is Putative F-box protein At1g67623.